We begin with the raw amino-acid sequence, 336 residues long: Fructose-1,6-bisphosphatase class 1 (336 aa).

Mg(2+)-binding residues include Glu-92, Asp-115, Leu-117, and Asp-118. Substrate is bound by residues 118-121, Asn-211, Tyr-244, 262-264, and Lys-274; these read DGSS and YLY. Glu-280 is a Mg(2+) binding site.

This sequence belongs to the FBPase class 1 family. As to quaternary structure, homotetramer. Mg(2+) is required as a cofactor.

It is found in the cytoplasm. It carries out the reaction beta-D-fructose 1,6-bisphosphate + H2O = beta-D-fructose 6-phosphate + phosphate. It functions in the pathway carbohydrate biosynthesis; gluconeogenesis. The protein is Fructose-1,6-bisphosphatase class 1 of Vibrio cholerae serotype O1 (strain ATCC 39315 / El Tor Inaba N16961).